Reading from the N-terminus, the 195-residue chain is Penicillin-binding protein activator LpoB (195 aa).

Residues 1-16 (MKKRALIVLAALVLAS) form the signal peptide. Cysteine 17 carries the N-palmitoyl cysteine lipid modification. Residue cysteine 17 is the site of S-diacylglycerol cysteine attachment. The tract at residues 19–51 (SRKPASPPAPIEPVPPPVTVSVQPPPPATSEPV) is disordered. Over residues 23 to 51 (ASPPAPIEPVPPPVTVSVQPPPPATSEPV) the composition is skewed to pro residues.

This sequence belongs to the LpoB family. In terms of assembly, interacts with PBP1b.

It localises to the cell outer membrane. Regulator of peptidoglycan synthesis that is essential for the function of penicillin-binding protein 1B (PBP1b). The chain is Penicillin-binding protein activator LpoB from Sodalis glossinidius (strain morsitans).